Reading from the N-terminus, the 38-residue chain is Large ribosomal subunit protein bL36 (38 aa).

The protein belongs to the bacterial ribosomal protein bL36 family.

The protein is Large ribosomal subunit protein bL36 of Hahella chejuensis (strain KCTC 2396).